Reading from the N-terminus, the 214-residue chain is Homeobox protein HEX homolog pha-2 (214 aa).

2 disordered regions span residues 1 to 50 and 180 to 214; these read MDQK…QKME and RRVRKDGEDEDEMPNGASARSLGQLQSSNPFLSHG. Positions 24-34 are enriched in low complexity; it reads SSESPIPTGSE. Residues 35 to 44 are compositionally biased toward polar residues; the sequence is CSLNESSDTT. The homeobox DNA-binding region spans 124 to 183; the sequence is RKGGQIRFTNEQTDALEHKFDSHKYLSPQERKKLAKSLSLSERQVKTWFQNRRAKWRRVR. Positions 200–214 are enriched in polar residues; the sequence is SLGQLQSSNPFLSHG.

It is found in the nucleus. Its function is as follows. Transcriptional repressor. Involved in pharyngeal development and required for the formation of the pharyngeal isthmus. Plays a role in modulating cytoskeleton in the muscle cells of the isthmus. Regulates expression of the acetylcholinesterase genes ace-1 and ace-2. May regulate its own expression. This chain is Homeobox protein HEX homolog pha-2, found in Caenorhabditis elegans.